Consider the following 220-residue polypeptide: Inner membrane protein YqjA (220 aa).

Residues 1–27 are Periplasmic-facing; sequence MELLTQLLQALWAQDFETLANPSMIGM. Residues 28–48 traverse the membrane as a helical segment; the sequence is LYFVLFVILFLENGLLPAAFL. Over 49 to 52 the chain is Cytoplasmic; it reads PGDS. 2 helical membrane-spanning segments follow: residues 53–73 and 74–94; these read LLVL…QTIL and LLTV…RWLG. Residues 95 to 154 are Cytoplasmic-facing; that stretch reads NTRTVQNWLSHLPAHYHQRAHHLFHKHGLSALLIGRFIAFVRTLLPTIAGLSGLNNARFQ. A helical membrane pass occupies residues 155-175; it reads FFNWMSGLLWVLILTTLGYML. Residues 176-191 are Periplasmic-facing; it reads GKTPVFLKYEDQLMSC. The helical transmembrane segment at 192 to 212 threads the bilayer; that stretch reads LMLLPVVLLVFGLAGSLVVLW. Residues 213-220 are Cytoplasmic-facing; sequence KKKYGNRG.

This sequence belongs to the DedA family.

It localises to the cell inner membrane. Its function is as follows. May be a membrane transporter required for proton motive force (PMF)-dependent drug efflux. Required, with YghB, for the proper export of certain periplasmic amidases and, possibly, other Tat substrates. May play a role in determining membrane lipid composition. In Escherichia coli (strain K12), this protein is Inner membrane protein YqjA (yqjA).